A 211-amino-acid polypeptide reads, in one-letter code: Transcriptional regulatory protein RcsA (211 aa).

The region spanning 135-200 (LDVHPLTLSQ…VIYHVVRLTD (66 aa)) is the HTH luxR-type domain. Residues 159-178 (TIQISDKMQIKAKTVSSHKG) constitute a DNA-binding region (H-T-H motif).

This sequence belongs to the RcsA family.

Its function is as follows. Component of the Rcs signaling system, which controls transcription of numerous genes. Binds to DNA to regulate expression of genes. In Pantoea stewartii subsp. stewartii (Erwinia stewartii), this protein is Transcriptional regulatory protein RcsA.